Here is a 165-residue protein sequence, read N- to C-terminus: MDIALDLQSIAVQEKTLVFPQFDAARAWALGSQLREFALARGHAVAIDVRTFGQPLFFALVDGATPDNVDWARRKGNVVAHFRRSSYAIGLRLQQAGATLADKHGLPAAEYASHGGAFPIAVAGAGVIGSVTVSGLPQRGDHELVVEALCAQLGHAYATLALTGN.

It belongs to the UPF0303 family.

This chain is UPF0303 protein BMA1246, found in Burkholderia mallei (strain ATCC 23344).